A 286-amino-acid polypeptide reads, in one-letter code: Short-chain dehydrogenase fogD (286 aa).

Positions 8, 34, 55, 147, 151, 180, and 182 each coordinate NADP(+). Tyrosine 147 (proton acceptor) is an active-site residue. The active-site Lowers pKa of active site Tyr is lysine 151.

It belongs to the short-chain dehydrogenases/reductases (SDR) family.

It participates in secondary metabolite biosynthesis. In terms of biological role, short-chain dehydrogenase; part of the gene cluster that mediates the biosynthesis of flavoglaucin and congeners (including aspergin, dihydroauroglaucin and auroglaucin), prenylated salicylaldehyde derivatives carrying a saturated or an unsaturated C-7 side chain. The PKS fogA releases the carboxylic acid (8E,10E,12E)-3,5,7-trihydroxytetradeca-8,10,12-trienoic acid as its product, as well as derivatives with one and two double bonds. FogA is indeed able to reduce the initial triketide, thus being at least partially responsible for the differently saturated heptyl side chains of flavoglaucin congeners. The oxidoreductases fogB, fogC and fogD modify the nascent polyketide in fogA-bound form and, together, fogA, fogB, fogC and fogD are necessary for the formation of the aromatic core and the cyclized PKS products are released as salicyl alcohols. In particular, fogB is responsible for oxidation of a hydroxyl group or reduction of remaining double bond(s) at the C-7 residue whereas fogD is probably involved in the reductive release of the modified PKS products. The cytochrome P450 monooxygenase fogE is then responsible for the hydroxylation at C-3 of the benzene ring. The fogE products are substrates of the prenyltransferase fogH and the prenylated benzyl alcohols are subsequently oxidized by the fogF to produce the final aryl aldehydes flavoglaucin and congeners. The short-chain dehydrogenase fogG does not seem to be involved in the biosynthesis of the prenylated salicylaldehyde derivatives. This Aspergillus ruber (strain CBS 135680) protein is Short-chain dehydrogenase fogD.